A 240-amino-acid chain; its full sequence is Regulatory protein SdiA (240 aa).

The 66-residue stretch at 173-238 (VMTPEMNFSK…QVACYAAATG (66 aa)) folds into the HTH luxR-type domain. Residues 197-216 (SAEIAMILSISENTVNFHQK) constitute a DNA-binding region (H-T-H motif).

Its function is as follows. Activates cell division by specifically increasing transcription from one of the two promoters that lie immediately upstream of the ftsQAZ gene cluster. Activates ydiV expression in response to extracellular autoinducer AI-1 (Vibrio fischeri autoinducer oxoC6). The sequence is that of Regulatory protein SdiA (sdiA) from Escherichia coli (strain K12).